The sequence spans 322 residues: Protein mono-ADP-ribosyltransferase PARP16 (322 aa).

Topologically, residues 1–287 are cytoplasmic; sequence MQPSGWAAAR…RASSQLSWFS (287 aa). The 87-residue stretch at 5-91 folds into the PARP alpha-helical domain; the sequence is GWAAAREAAG…AWDLVSWILS (87 aa). Position 37 is an ADP-ribosyl aspartic acid (Asp-37). Position 70 is an ADP-ribosyl glutamic acid (Glu-70). A PARP catalytic domain is found at 94–279; that stretch reads VLTIHSAGKA…VYSQKPPKRA (186 aa). An N6-(ADP-ribosyl)lysine mark is found at Lys-110 and Lys-137. Residues His-152, Tyr-182, and Tyr-254 each contribute to the NAD(+) site. A helical transmembrane segment spans residues 288–308; the sequence is SHWFTVMISLYLLLLLIVSVI. Topologically, residues 309–322 are lumenal; that stretch reads NSSAFQHFWNRAKR.

It belongs to the ARTD/PARP family. Interacts with KPNB1. In terms of processing, auto-mono-ADP-ribosylated.

Its subcellular location is the endoplasmic reticulum membrane. The catalysed reaction is L-aspartyl-[protein] + NAD(+) = 4-O-(ADP-D-ribosyl)-L-aspartyl-[protein] + nicotinamide. It catalyses the reaction L-glutamyl-[protein] + NAD(+) = 5-O-(ADP-D-ribosyl)-L-glutamyl-[protein] + nicotinamide. It carries out the reaction L-lysyl-[protein] + NAD(+) = N(6)-(ADP-D-ribosyl)-L-lysyl-[protein] + nicotinamide + H(+). Its activity is regulated as follows. In absence of activation signal, PARP16 is autoinhibited by the PARP alpha-helical domain (also named HD region), which prevents effective NAD(+)-binding. Activity is highly stimulated by signals, which unfold the PARP alpha-helical domain, relieving autoinhibition. Its function is as follows. Intracellular mono-ADP-ribosyltransferase that plays a role in different processes, such as protein translation and unfolded protein response (UPR), through the mono-ADP-ribosylation of proteins involved in those processes. Acts as an inhibitor of protein translation by catalyzing mono-ADP-ribosylation of ribosomal subunits, such as RPL14 and RPS6, thereby inhibiting polysome assembly and mRNA loading. Mono-ADP-ribosylation of ribosomal subunits is promoted by NMNAT2. Involved in the unfolded protein response (UPR) by ADP-ribosylating and activating EIF2AK3 and ERN1, two important UPR effectors. May also mediate mono-ADP-ribosylation of karyopherin KPNB1 a nuclear import factor. May not modify proteins on arginine or cysteine residues compared to other mono-ADP-ribosyltransferases. This is Protein mono-ADP-ribosyltransferase PARP16 from Homo sapiens (Human).